A 292-amino-acid polypeptide reads, in one-letter code: MIAGSMVALVTPMDAQGGLDWDSLSKLVDFHLQEGTNAIVAVGTTGESATLSVAEHIEVIRRVVDQVNGRIPVIAGTGANSTSEAVELTENAKTAGADACLLVTPYYNKPTQEGLYLHFKHIAEAVAIPQILYNVPGRTVCDMLPDTVERLSKVPNIIGIKEATGDLKRGREVLDRVSTDFLVYSGDDPTAVELMLMGGKGNISVTANVAPRAMSELCAAAMAGDAETARAINERLMPLHRALFLEANPIPVKWALHEMGLMGNGIRLPLTWLSQSYQEPLRQAMRQTGVLA.

Threonine 45 is a pyruvate binding site. Tyrosine 133 (proton donor/acceptor) is an active-site residue. The Schiff-base intermediate with substrate role is filled by lysine 161. Isoleucine 203 contacts pyruvate.

It belongs to the DapA family. Homodimer.

Its subcellular location is the cytoplasm. The catalysed reaction is L-aspartate 4-semialdehyde + pyruvate = (2S,4S)-4-hydroxy-2,3,4,5-tetrahydrodipicolinate + H2O + H(+). The protein operates within amino-acid biosynthesis; L-lysine biosynthesis via DAP pathway; (S)-tetrahydrodipicolinate from L-aspartate: step 3/4. Catalyzes the condensation of (S)-aspartate-beta-semialdehyde [(S)-ASA] and pyruvate to 4-hydroxy-tetrahydrodipicolinate (HTPA). The sequence is that of 4-hydroxy-tetrahydrodipicolinate synthase from Stutzerimonas stutzeri (strain A1501) (Pseudomonas stutzeri).